A 173-amino-acid chain; its full sequence is ATP synthase subunit b (173 aa).

A helical transmembrane segment spans residues 25–45 (LINLVIVIGVLYWFLKGFLGG).

Belongs to the ATPase B chain family. As to quaternary structure, F-type ATPases have 2 components, F(1) - the catalytic core - and F(0) - the membrane proton channel. F(1) has five subunits: alpha(3), beta(3), gamma(1), delta(1), epsilon(1). F(0) has four main subunits: a(1), b(1), b'(1) and c(10-14). The alpha and beta chains form an alternating ring which encloses part of the gamma chain. F(1) is attached to F(0) by a central stalk formed by the gamma and epsilon chains, while a peripheral stalk is formed by the delta, b and b' chains.

It is found in the cellular thylakoid membrane. Functionally, f(1)F(0) ATP synthase produces ATP from ADP in the presence of a proton or sodium gradient. F-type ATPases consist of two structural domains, F(1) containing the extramembraneous catalytic core and F(0) containing the membrane proton channel, linked together by a central stalk and a peripheral stalk. During catalysis, ATP synthesis in the catalytic domain of F(1) is coupled via a rotary mechanism of the central stalk subunits to proton translocation. In terms of biological role, component of the F(0) channel, it forms part of the peripheral stalk, linking F(1) to F(0). This is ATP synthase subunit b from Synechococcus sp. (strain CC9311).